We begin with the raw amino-acid sequence, 190 residues long: Isopentenyl-diphosphate Delta-isomerase (190 aa).

Residues His27 and His34 each coordinate Mn(2+). Residues 32 to 171 (PLHFAFSSYI…PFVFSPWMVD (140 aa)) form the Nudix hydrolase domain. Residue Cys69 is part of the active site. Cys69 lines the Mg(2+) pocket. Residue His71 coordinates Mn(2+). Glu89 provides a ligand contact to Mg(2+). Mn(2+) is bound by residues Glu119 and Glu121. Glu121 is a catalytic residue.

This sequence belongs to the IPP isomerase type 1 family. The cofactor is Mg(2+). Requires Mn(2+) as cofactor.

The protein localises to the cytoplasm. The catalysed reaction is isopentenyl diphosphate = dimethylallyl diphosphate. The protein operates within isoprenoid biosynthesis; dimethylallyl diphosphate biosynthesis; dimethylallyl diphosphate from isopentenyl diphosphate: step 1/1. In terms of biological role, catalyzes the 1,3-allylic rearrangement of the homoallylic substrate isopentenyl (IPP) to its highly electrophilic allylic isomer, dimethylallyl diphosphate (DMAPP). This is Isopentenyl-diphosphate Delta-isomerase from Corynebacterium efficiens (strain DSM 44549 / YS-314 / AJ 12310 / JCM 11189 / NBRC 100395).